The primary structure comprises 201 residues: UPF0098 protein MT1961 (201 aa).

The disordered stretch occupies residues 125 to 146; the sequence is TADGETPGGGISLPNSSGQPAY.

Belongs to the UPF0098 family.

This Mycobacterium tuberculosis (strain CDC 1551 / Oshkosh) protein is UPF0098 protein MT1961.